Consider the following 249-residue polypeptide: Probable transcriptional regulatory protein CYA_2259 (249 aa).

Belongs to the TACO1 family.

It is found in the cytoplasm. The sequence is that of Probable transcriptional regulatory protein CYA_2259 from Synechococcus sp. (strain JA-3-3Ab) (Cyanobacteria bacterium Yellowstone A-Prime).